Consider the following 172-residue polypeptide: MSDEITNGAAKPTEAISGPTFTIEKIYIKDVSFEAPNSPAVFNEAGQPELQLNLNQRVQRLNENAFELVLHVTLTCTAAGKTAYVVEVQQAGVFGLFGLDQHAIGVLLGTQCPNILFPYVRSLVSDLIQIGGFPPFYLQPINFDALYAETLRQRAQNEKEGSQISSQPAGNA.

The protein belongs to the SecB family. Homotetramer, a dimer of dimers. One homotetramer interacts with 1 SecA dimer.

It is found in the cytoplasm. One of the proteins required for the normal export of preproteins out of the cell cytoplasm. It is a molecular chaperone that binds to a subset of precursor proteins, maintaining them in a translocation-competent state. It also specifically binds to its receptor SecA. This Xylella fastidiosa (strain Temecula1 / ATCC 700964) protein is Protein-export protein SecB.